The following is a 496-amino-acid chain: NAD(P)H-quinone oxidoreductase subunit 2 A, chloroplastic (496 aa).

The next 14 helical transmembrane spans lie at 13 to 33 (SILP…IDLL), 41 to 61 (TFWS…ILLL), 83 to 103 (IFRF…VDYI), 110 to 130 (VTEF…LCGA), 133 to 153 (LISI…LSGY), 168 to 188 (LLMG…PYGL), 213 to 233 (VSIA…LVPF), 245 to 265 (PTPV…ALAT), 279 to 299 (WHLP…LIAV), 307 to 327 (MLAY…IAGD), 338 to 358 (YMLI…SFGL), 380 to 400 (LSLV…GFFG), 413 to 435 (LYFL…SRII), and 470 to 490 (MILC…IIAI).

The protein belongs to the complex I subunit 2 family. NDH is composed of at least 16 different subunits, 5 of which are encoded in the nucleus.

It is found in the plastid. It localises to the chloroplast thylakoid membrane. It catalyses the reaction a plastoquinone + NADH + (n+1) H(+)(in) = a plastoquinol + NAD(+) + n H(+)(out). It carries out the reaction a plastoquinone + NADPH + (n+1) H(+)(in) = a plastoquinol + NADP(+) + n H(+)(out). Functionally, NDH shuttles electrons from NAD(P)H:plastoquinone, via FMN and iron-sulfur (Fe-S) centers, to quinones in the photosynthetic chain and possibly in a chloroplast respiratory chain. The immediate electron acceptor for the enzyme in this species is believed to be plastoquinone. Couples the redox reaction to proton translocation, and thus conserves the redox energy in a proton gradient. The sequence is that of NAD(P)H-quinone oxidoreductase subunit 2 A, chloroplastic from Psilotum nudum (Whisk fern).